The primary structure comprises 142 residues: Large ribosomal subunit protein uL13 (142 aa).

It belongs to the universal ribosomal protein uL13 family. Part of the 50S ribosomal subunit.

Functionally, this protein is one of the early assembly proteins of the 50S ribosomal subunit, although it is not seen to bind rRNA by itself. It is important during the early stages of 50S assembly. This is Large ribosomal subunit protein uL13 from Buchnera aphidicola subsp. Cinara cedri (strain Cc).